A 251-amino-acid chain; its full sequence is Methionine aminopeptidase (251 aa).

Position 76 (histidine 76) interacts with substrate. Positions 93, 104, and 168 each coordinate a divalent metal cation. A substrate-binding site is contributed by histidine 175. 2 residues coordinate a divalent metal cation: glutamate 202 and glutamate 233.

Belongs to the peptidase M24A family. Methionine aminopeptidase type 1 subfamily. Monomer. It depends on Co(2+) as a cofactor. Requires Zn(2+) as cofactor. The cofactor is Mn(2+). Fe(2+) serves as cofactor.

It carries out the reaction Release of N-terminal amino acids, preferentially methionine, from peptides and arylamides.. Functionally, removes the N-terminal methionine from nascent proteins. The N-terminal methionine is often cleaved when the second residue in the primary sequence is small and uncharged (Met-Ala-, Cys, Gly, Pro, Ser, Thr, or Val). Requires deformylation of the N(alpha)-formylated initiator methionine before it can be hydrolyzed. The polypeptide is Methionine aminopeptidase (Staphylococcus epidermidis (strain ATCC 12228 / FDA PCI 1200)).